A 347-amino-acid polypeptide reads, in one-letter code: NADH-ubiquinone oxidoreductase chain 2 (347 aa).

A run of 10 helical transmembrane segments spans residues 13–33, 55–75, 96–116, 122–142, 151–171, 178–198, 199–219, 237–257, 277–297, and 326–346; these read VFTG…WLGL, AAIK…MAIL, LMIV…FWVP, VPLT…ISIM, TNIL…GGLN, ILAY…PYNP, NITI…FLIL, LTWL…LPPL, IAPT…ARLI, and LPTL…ILSI.

The protein belongs to the complex I subunit 2 family. As to quaternary structure, core subunit of respiratory chain NADH dehydrogenase (Complex I) which is composed of 45 different subunits. Interacts with TMEM242.

The protein resides in the mitochondrion inner membrane. It catalyses the reaction a ubiquinone + NADH + 5 H(+)(in) = a ubiquinol + NAD(+) + 4 H(+)(out). In terms of biological role, core subunit of the mitochondrial membrane respiratory chain NADH dehydrogenase (Complex I) which catalyzes electron transfer from NADH through the respiratory chain, using ubiquinone as an electron acceptor. Essential for the catalytic activity and assembly of complex I. This is NADH-ubiquinone oxidoreductase chain 2 from Pongo pygmaeus (Bornean orangutan).